Here is a 601-residue protein sequence, read N- to C-terminus: Dual specificity tyrosine-phosphorylation-regulated kinase 2 (601 aa).

The segment at 1–24 is disordered; the sequence is MLTRKPSAAAPAAYPTGRGGDSAV. A Phosphoserine modification is found at serine 30. Threonine 106 carries the post-translational modification Phosphothreonine; by ATM. The Nuclear localization signal motif lies at 189–191; sequence KKR. Residues 222-535 enclose the Protein kinase domain; it reads YEVLKVIGKG…PGQALRHPWL (314 aa). ATP is bound by residues 228 to 236, lysine 251, and 301 to 304; these read IGKGSFGQV and FELL. Aspartate 348 (proton acceptor) is an active-site residue. Threonine 381 bears the Phosphothreonine; by MAP3K10 mark. Residue tyrosine 382 is modified to Phosphotyrosine; by autocatalysis. Serine 442 is modified (phosphoserine; by ATM). Position 449 is a phosphoserine; by MAP3K10 (serine 449).

Belongs to the protein kinase superfamily. CMGC Ser/Thr protein kinase family. MNB/DYRK subfamily. As to quaternary structure, component of an E3 ligase complex containing DYRK2, EDD/UBR5, DDB1 and DCAF1 (EDVP complex). Interacts directly with EDD/UBR5, DDB1 and DCAF1. Interacts with SIAH2 and MDM2. Interacts with MAP3K10 and NFATC1. May also interact with CCNL2. Requires Mg(2+) as cofactor. Mn(2+) is required as a cofactor. Post-translationally, autophosphorylates cotranslationally on the second tyrosine residue in the Tyr-X-Tyr motif in the activation loop, but once mature, does not have any protein tyrosine kinase activity. Phosphorylated at Thr-106 and Ser-442 by ATM in response to genotoxic stress. Under normal conditions, polyubiquitinated in the nucleus by MDM2, leading to its proteasomal degradation. Phosphorylation on Thr-106 and Ser-442 by ATM in response to genotoxic stress disrupts MDM2 binding and prevents MDM2-mediated ubiquitination and subsequent proteasomal degradation. Polyubiquitinated by SIAH2, leading to its proteasomal degradation. Polyubiquitinated by SIAH2 occurs under normal conditions, and is enhanced in response to hypoxia. As to expression, testis, after the onset of spermatogenesis.

The protein resides in the cytoplasm. It localises to the nucleus. The enzyme catalyses L-seryl-[protein] + ATP = O-phospho-L-seryl-[protein] + ADP + H(+). The catalysed reaction is L-threonyl-[protein] + ATP = O-phospho-L-threonyl-[protein] + ADP + H(+). It carries out the reaction L-tyrosyl-[protein] + ATP = O-phospho-L-tyrosyl-[protein] + ADP + H(+). With respect to regulation, activated by autophosphorylation on the second tyrosine residue in the Tyr-X-Tyr motif in the activation loop. Inhibited by acridine analogs, purvalanol, and barely by harmine. Inhibited by leucettine and leucettine derivatives. Serine/threonine-protein kinase involved in the regulation of the mitotic cell cycle, cell proliferation, apoptosis, organization of the cytoskeleton and neurite outgrowth. Functions in part via its role in ubiquitin-dependent proteasomal protein degradation. Functions downstream of ATM and phosphorylates p53/TP53 at 'Ser-46', and thereby contributes to the induction of apoptosis in response to DNA damage. Phosphorylates NFATC1, and thereby inhibits its accumulation in the nucleus and its transcription factor activity. Phosphorylates EIF2B5 at 'Ser-544', enabling its subsequent phosphorylation and inhibition by GSK3B. Likewise, phosphorylation of NFATC1, CRMP2/DPYSL2 and CRMP4/DPYSL3 promotes their subsequent phosphorylation by GSK3B. May play a general role in the priming of GSK3 substrates. Inactivates GYS1 by phosphorylation at 'Ser-641', and potentially also a second phosphorylation site, thus regulating glycogen synthesis. Mediates EDVP E3 ligase complex formation and is required for the phosphorylation and subsequent degradation of KATNA1. Phosphorylates TERT at 'Ser-457', promoting TERT ubiquitination by the EDVP complex. Phosphorylates SIAH2, and thereby increases its ubiquitin ligase activity. Promotes the proteasomal degradation of MYC and JUN, and thereby regulates progress through the mitotic cell cycle and cell proliferation. Promotes proteasomal degradation of GLI2 and GLI3, and thereby plays a role in smoothened and sonic hedgehog signaling. Plays a role in cytoskeleton organization and neurite outgrowth via its phosphorylation of DCX and DPYSL2. Phosphorylates CRMP2/DPYSL2, CRMP4/DPYSL3, DCX, EIF2B5, EIF4EBP1, GLI2, GLI3, GYS1, JUN, MDM2, MYC, NFATC1, p53/TP53, TAU/MAPT and KATNA1. Can phosphorylate histone H1, histone H3 and histone H2B (in vitro). Can phosphorylate CARHSP1 (in vitro). This is Dual specificity tyrosine-phosphorylation-regulated kinase 2 (DYRK2) from Homo sapiens (Human).